The following is a 549-amino-acid chain: MFS-type transporter TwmF (549 aa).

The next 4 membrane-spanning stretches (helical) occupy residues 29 to 49 (IVIG…VLTI), 63 to 83 (NFIW…PLFG), 99 to 119 (VAIF…AMLI), and 126 to 146 (GVGS…LVPL). The N-linked (GlcNAc...) asparagine glycan is linked to N151. A run of 10 helical transmembrane segments spans residues 155–175 (ILMS…GAIV), 182–202 (WVFY…FIFL), 221–241 (LVGN…LSYA), 249–269 (SWHT…FAGL), 291–311 (IILA…LFFL), 328–348 (VALL…AIAL), 355–375 (KPVH…FTLF), 390–410 (IVAF…QAFI), 421–441 (AWYF…AAIF), and 502–522 (VSIA…DVGL).

It belongs to the major facilitator superfamily.

It is found in the membrane. MFS efflux transporter; part of the gene cluster that mediates the biosynthesis of wortmanamides A and B, reduced long-chain polyketides amidated with a specific omega-amino acid, 5-aminopentanoic acid (5PA). The sequence is that of MFS-type transporter TwmF from Talaromyces wortmannii (Penicillium wortmannii).